We begin with the raw amino-acid sequence, 445 residues long: Tubulin beta-3 chain (445 aa).

The MREI motif motif lies at 1-4; it reads MREI. Residues Gln11, Glu69, Ser138, Gly142, Thr143, Gly144, Asn204, and Asn226 each coordinate GTP. Position 69 (Glu69) interacts with Mg(2+). Residues 425–445 form a disordered region; it reads YQDATAEEEGEFEEEAEEEAE. The segment covering 429–445 has biased composition (acidic residues); sequence TAEEEGEFEEEAEEEAE. Glu438 bears the 5-glutamyl polyglutamate mark.

This sequence belongs to the tubulin family. As to quaternary structure, dimer of alpha and beta chains. A typical microtubule is a hollow water-filled tube with an outer diameter of 25 nm and an inner diameter of 15 nM. Alpha-beta heterodimers associate head-to-tail to form protofilaments running lengthwise along the microtubule wall with the beta-tubulin subunit facing the microtubule plus end conferring a structural polarity. Microtubules usually have 13 protofilaments but different protofilament numbers can be found in some organisms and specialized cells. Mg(2+) is required as a cofactor. In terms of processing, some glutamate residues at the C-terminus are polyglycylated, resulting in polyglycine chains on the gamma-carboxyl group. Glycylation is mainly limited to tubulin incorporated into axonemes (cilia and flagella) whereas glutamylation is prevalent in neuronal cells, centrioles, axonemes, and the mitotic spindle. Both modifications can coexist on the same protein on adjacent residues, and lowering polyglycylation levels increases polyglutamylation, and reciprocally. The precise function of polyglycylation is still unclear. Post-translationally, some glutamate residues at the C-terminus are polyglutamylated, resulting in polyglutamate chains on the gamma-carboxyl group. Polyglutamylation plays a key role in microtubule severing by spastin (SPAST). SPAST preferentially recognizes and acts on microtubules decorated with short polyglutamate tails: severing activity by SPAST increases as the number of glutamates per tubulin rises from one to eight, but decreases beyond this glutamylation threshold. In terms of tissue distribution, highly expressed in testis.

It is found in the cytoplasm. The protein resides in the cytoskeleton. In terms of biological role, tubulin is the major constituent of microtubules, a cylinder consisting of laterally associated linear protofilaments composed of alpha- and beta-tubulin heterodimers. Microtubules grow by the addition of GTP-tubulin dimers to the microtubule end, where a stabilizing cap forms. Below the cap, tubulin dimers are in GDP-bound state, owing to GTPase activity of alpha-tubulin. TUBB3 plays a role in dorsal root ganglion axon projection towards the spinal cord. The sequence is that of Tubulin beta-3 chain from Gallus gallus (Chicken).